The primary structure comprises 90 residues: Protein RALF-like 29 (90 aa).

The signal sequence occupies residues 1-25 (MIKTKEVTFVTILIVLCVFISTIHA). 2 disulfides stabilise this stretch: Cys41-Cys50 and Cys63-Cys69.

Belongs to the plant rapid alkalinization factor (RALF) family.

It localises to the secreted. Its function is as follows. Cell signaling peptide that may regulate plant stress, growth, and development. Mediates a rapid alkalinization of extracellular space by mediating a transient increase in the cytoplasmic Ca(2+) concentration leading to a calcium-dependent signaling events through a cell surface receptor and a concomitant activation of some intracellular mitogen-activated protein kinases. This is Protein RALF-like 29 (RALFL29) from Arabidopsis thaliana (Mouse-ear cress).